The primary structure comprises 368 residues: Alanine racemase (368 aa).

The active-site Proton acceptor; specific for D-alanine is Lys-40. An N6-(pyridoxal phosphate)lysine modification is found at Lys-40. Arg-134 serves as a coordination point for substrate. The active-site Proton acceptor; specific for L-alanine is the Tyr-263. Position 310 (Met-310) interacts with substrate.

This sequence belongs to the alanine racemase family. Pyridoxal 5'-phosphate serves as cofactor.

It catalyses the reaction L-alanine = D-alanine. It functions in the pathway amino-acid biosynthesis; D-alanine biosynthesis; D-alanine from L-alanine: step 1/1. In terms of biological role, catalyzes the interconversion of L-alanine and D-alanine. May also act on other amino acids. This chain is Alanine racemase (alr), found in Listeria monocytogenes serovar 1/2a (strain ATCC BAA-679 / EGD-e).